A 431-amino-acid chain; its full sequence is Protein SHQ1 homolog (431 aa).

Belongs to the SHQ1 family.

Its function is as follows. Required for the quantitative accumulation of H/ACA ribonucleoproteins (RNPs). This chain is Protein SHQ1 homolog, found in Caenorhabditis elegans.